A 1325-amino-acid chain; its full sequence is Cellulose synthase 1 operon protein C (1325 aa).

An N-terminal signal peptide occupies residues 1–30 (MNRRYVFSLSAGLLASSCMGAIMPVPVARA). TPR repeat units lie at residues 50–83 (RQILLQQARFWLQQQQYDNARQALQNAQRIAPDA), 85–117 (DVLEVQGEYQTAMGNREAAADTLRHLQEVAPGS), 292–325 (AGLARQAGFQQLNSGRLSAAEQSFQSALQINSHD), 326–359 (ADSLGGMGLVSMRQGDAAEARRYFQEAMAADPKT), 406–439 (TGATLMLADLQRTTGQIDASEQEYRSVLARDPNN), 558–591 (NDAATRRLLSGLSPEDYSPAIRSIAEEMQIKEDL), 702–735 (MGIAVAQSDLLNQRGDQAQAYDHLAPALRADPEA), and 737–769 (SPKLALARLYNGEGKSSKALDIDLAVLRHNPQD). Positions 838–886 (VEGSRSASGPAATEEDALAPPSSNPFRHHGYGRQTELGAPVTGGSYSME) are disordered.

It belongs to the AcsC/BcsC family.

The protein resides in the cell outer membrane. It participates in glycan metabolism; bacterial cellulose biosynthesis. Functionally, required for maximal bacterial cellulose synthesis. It may be involved in the formation of a membrane complex for extrusion of the cellulose product. In Komagataeibacter xylinus (Gluconacetobacter xylinus), this protein is Cellulose synthase 1 operon protein C (bcsCI).